The sequence spans 95 residues: MSVDAATVRKIAQLARIAVTDAEVPHLQGELNAMLAFVEQLSEVNVEGVEPMTSVTPMAMKKRQDVVTEGDIADDIVKNAPMTENNFFLVPKVVE.

It belongs to the GatC family. Heterotrimer of A, B and C subunits.

It carries out the reaction L-glutamyl-tRNA(Gln) + L-glutamine + ATP + H2O = L-glutaminyl-tRNA(Gln) + L-glutamate + ADP + phosphate + H(+). The enzyme catalyses L-aspartyl-tRNA(Asn) + L-glutamine + ATP + H2O = L-asparaginyl-tRNA(Asn) + L-glutamate + ADP + phosphate + 2 H(+). In terms of biological role, allows the formation of correctly charged Asn-tRNA(Asn) or Gln-tRNA(Gln) through the transamidation of misacylated Asp-tRNA(Asn) or Glu-tRNA(Gln) in organisms which lack either or both of asparaginyl-tRNA or glutaminyl-tRNA synthetases. The reaction takes place in the presence of glutamine and ATP through an activated phospho-Asp-tRNA(Asn) or phospho-Glu-tRNA(Gln). The polypeptide is Aspartyl/glutamyl-tRNA(Asn/Gln) amidotransferase subunit C (Bradyrhizobium sp. (strain ORS 278)).